Here is a 257-residue protein sequence, read N- to C-terminus: Glutamate racemase (257 aa).

Residues 12 to 13 (DS) and 44 to 45 (YG) each bind substrate. Cysteine 75 (proton donor/acceptor) is an active-site residue. Substrate is bound at residue 76–77 (NT). Catalysis depends on cysteine 186, which acts as the Proton donor/acceptor. 187 to 188 (TH) contacts substrate.

This sequence belongs to the aspartate/glutamate racemases family.

The catalysed reaction is L-glutamate = D-glutamate. It functions in the pathway cell wall biogenesis; peptidoglycan biosynthesis. Its function is as follows. Provides the (R)-glutamate required for cell wall biosynthesis. The sequence is that of Glutamate racemase from Clostridium kluyveri (strain NBRC 12016).